Reading from the N-terminus, the 465-residue chain is Dihydrolipoyllysine-residue acetyltransferase component 5 of pyruvate dehydrogenase complex, chloroplastic (465 aa).

The transit peptide at 1 to 31 (MSRLLQTPFLPSVSLPTKTRSSVTGFRVKPR) directs the protein to the chloroplast. The Lipoyl-binding domain occupies 39-114 (IREIFMPALS…PVGSAIALLA (76 aa)). The residue at position 80 (lysine 80) is an N6-lipoyllysine. Residues 123–148 (AKAKASGGGGGGDSKAPPASPPTAAV) form a disordered region. Positions 136 to 148 (SKAPPASPPTAAV) are enriched in low complexity. A Peripheral subunit-binding (PSBD) domain is found at 184-221 (VASPYAKKLAKELKVELAGLVGSGPMGRIVAKDVEAVA). Histidine 438 is an active-site residue.

It belongs to the 2-oxoacid dehydrogenase family. Requires (R)-lipoate as cofactor.

The protein localises to the plastid. Its subcellular location is the chloroplast stroma. It carries out the reaction N(6)-[(R)-dihydrolipoyl]-L-lysyl-[protein] + acetyl-CoA = N(6)-[(R)-S(8)-acetyldihydrolipoyl]-L-lysyl-[protein] + CoA. Its function is as follows. The pyruvate dehydrogenase complex catalyzes the overall conversion of pyruvate to acetyl-CoA and CO(2). It contains multiple copies of three enzymatic components: pyruvate dehydrogenase (E1), dihydrolipoamide acetyltransferase (E2) and lipoamide dehydrogenase (E3). The polypeptide is Dihydrolipoyllysine-residue acetyltransferase component 5 of pyruvate dehydrogenase complex, chloroplastic (EMB3003) (Arabidopsis thaliana (Mouse-ear cress)).